The following is a 320-amino-acid chain: Serpentine receptor class delta-40 (320 aa).

7 consecutive transmembrane segments (helical) span residues I12 to I32, M42 to C62, Y95 to F115, I133 to I153, L189 to F209, A243 to T263, and F273 to V293.

This sequence belongs to the nematode receptor-like protein srd family.

The protein localises to the membrane. In Caenorhabditis elegans, this protein is Serpentine receptor class delta-40 (srd-40).